The following is a 130-amino-acid chain: Small ribosomal subunit protein uS8 (130 aa).

It belongs to the universal ribosomal protein uS8 family. In terms of assembly, part of the 30S ribosomal subunit. Contacts proteins S5 and S12.

One of the primary rRNA binding proteins, it binds directly to 16S rRNA central domain where it helps coordinate assembly of the platform of the 30S subunit. This chain is Small ribosomal subunit protein uS8, found in Marinobacter nauticus (strain ATCC 700491 / DSM 11845 / VT8) (Marinobacter aquaeolei).